The chain runs to 510 residues: Histidine ammonia-lyase (510 aa).

The segment at residues 143–145 (ASG) is a cross-link (5-imidazolinone (Ala-Gly)). Position 144 is a 2,3-didehydroalanine (Ser) (serine 144).

Belongs to the PAL/histidase family. Post-translationally, contains an active site 4-methylidene-imidazol-5-one (MIO), which is formed autocatalytically by cyclization and dehydration of residues Ala-Ser-Gly.

The protein localises to the cytoplasm. The enzyme catalyses L-histidine = trans-urocanate + NH4(+). The protein operates within amino-acid degradation; L-histidine degradation into L-glutamate; N-formimidoyl-L-glutamate from L-histidine: step 1/3. The protein is Histidine ammonia-lyase of Pseudomonas putida (strain ATCC 47054 / DSM 6125 / CFBP 8728 / NCIMB 11950 / KT2440).